Reading from the N-terminus, the 357-residue chain is Sorbitol dehydrogenase 1 (357 aa).

Zn(2+) is bound at residue Cys-43. Tyr-49 is a binding site for substrate. Residues His-68 and Glu-69 each contribute to the Zn(2+) site. Glu-154 lines the substrate pocket. Residues Asp-202, Lys-207, 275-277, and 299-301 each bind NAD(+); these read VGM and CFR. The substrate site is built by Arg-301 and Tyr-302.

It belongs to the zinc-containing alcohol dehydrogenase family. As to quaternary structure, homotetramer. The cofactor is Zn(2+).

The catalysed reaction is keto-D-fructose + NADH + H(+) = D-sorbitol + NAD(+). It catalyses the reaction xylitol + NAD(+) = D-xylulose + NADH + H(+). Its function is as follows. Polyol dehydrogenase that catalyzes the reversible NAD(+)-dependent oxidation of various sugar alcohols. Is active with D-sorbitol (D-glucitol) and xylitol as substrates, leading to the C2-oxidized product D-fructose and D-xylulose, respectively. Is likely involved in the utilization of D-sorbitol as a sole carbon source for growth. Has no activity on mannitol and primary alcohols such as ethanol. The sequence is that of Sorbitol dehydrogenase 1 (SOR1) from Saccharomyces cerevisiae (strain ATCC 204508 / S288c) (Baker's yeast).